The sequence spans 335 residues: Proline racemase (335 aa).

The Proton acceptor role is filled by Cys-91. The Proton donor role is filled by Cys-255.

This sequence belongs to the proline racemase family. As to quaternary structure, homodimer.

The enzyme catalyses L-proline = D-proline. Its function is as follows. Catalyzes the reversible interconversion of L- and D-proline. Plays an important role in the regulation of intra- and extracellular amino acid pools, allowing the bacterium to profit from host precursors and enzymatic pathways. Strong B-cell mitogen. The chain is Proline racemase from Clostridioides difficile (strain 630) (Peptoclostridium difficile).